Here is an 89-residue protein sequence, read N- to C-terminus: UPF0237 protein LMOf2365_0562 (89 aa).

Positions 4 to 78 (VLTVIGKDNV…EDLQVKIHIQ (75 aa)) constitute an ACT domain.

Belongs to the UPF0237 family.

This chain is UPF0237 protein LMOf2365_0562, found in Listeria monocytogenes serotype 4b (strain F2365).